A 609-amino-acid chain; its full sequence is MKLSSSSSFGLCILVVFFCFVVIESAKIRIDGYNDEAWIDPYDMLNYDPTTKRMRKSTESESYQNVPTKRREFNSESCDVPKCPDEHECIKKLHILQKEFDEQKSKSTATLSKPVCLPVFKRFLSKLLKETSKLGLPDDGITAMHYDAEVKLSKQSLAEIQKLLNDEDGWTTGAMDEALSQILVQFKLHDYEAWKWRFEDTFHVDVDTVLKVSLIVLIIVAIICTQLWSVVSWFVQFRRMFAVSFFISLIWNWFHLYMLAFAEHKKNIVQVESFNAKCTGLKQLNWQDSLSEWYRRTWTLQDDPCKKYYEVLVVNPILLVPPTKAITITITNFITDPLKHIGEGISEFLRALLKDLPVTLQIPVLIIIILAILIFVYGSAQAAIHQVARFPRLGWRQEQPPPAVGQRQNPQLRAHEEPWEGGDARQPLPMRQDNRGNHVGNRGDQGFRDANAPENREEDRSMDIRQEFSTKRTPVETLQATGNTFPDDETDSQQRTQELDSGANVEEEVKVEEKEKKESFSVDNKEQKETKSPDRSEPITSEPPSSIDVKTVGADQGNEHLMCTKRKWAAQNGFKLQVILCEINSEASADLPEEEECFSFKHPVQETQS.

Positions 1–25 are cleaved as a signal peptide; it reads MKLSSSSSFGLCILVVFFCFVVIES. The next 3 helical transmembrane spans lie at 212–235, 241–260, and 358–380; these read VSLI…SWFV, FAVS…YMLA, and VTLQ…YGSA. The segment at 398-553 is disordered; that stretch reads EQPPPAVGQR…PSSIDVKTVG (156 aa). 2 stretches are compositionally biased toward basic and acidic residues: residues 454-474 and 507-537; these read ENRE…KRTP and EEVK…DRSE. The span at 538–547 shows a compositional bias: low complexity; that stretch reads PITSEPPSSI.

Belongs to the chloride channel MCLC family. As to expression, expressed in the hindbrain, swim bladder and the eye at 1 day post fertilization (dpf) with increased expression at 3 dpf. At 3 dpf, most prominent expression in the retina, with strong expression in the ganglion cell layer, outer nuclear layer and the retinal pigmented epithelium.

The protein resides in the endoplasmic reticulum membrane. It localises to the golgi apparatus membrane. The protein localises to the nucleus membrane. Functionally, seems to act as a chloride ion channel. Plays a role in retina development. The protein is Chloride channel CLIC-like protein 1 of Danio rerio (Zebrafish).